Consider the following 211-residue polypeptide: Probable nicotinate-nucleotide adenylyltransferase (211 aa).

The protein belongs to the NadD family.

The catalysed reaction is nicotinate beta-D-ribonucleotide + ATP + H(+) = deamido-NAD(+) + diphosphate. The protein operates within cofactor biosynthesis; NAD(+) biosynthesis; deamido-NAD(+) from nicotinate D-ribonucleotide: step 1/1. In terms of biological role, catalyzes the reversible adenylation of nicotinate mononucleotide (NaMN) to nicotinic acid adenine dinucleotide (NaAD). The chain is Probable nicotinate-nucleotide adenylyltransferase from Cellvibrio japonicus (strain Ueda107) (Pseudomonas fluorescens subsp. cellulosa).